Here is a 292-residue protein sequence, read N- to C-terminus: 4-hydroxy-tetrahydrodipicolinate synthase (292 aa).

Thr50 serves as a coordination point for pyruvate. The active-site Proton donor/acceptor is the Tyr139. Lys167 acts as the Schiff-base intermediate with substrate in catalysis. Ile208 provides a ligand contact to pyruvate.

The protein belongs to the DapA family. As to quaternary structure, homotetramer; dimer of dimers.

Its subcellular location is the cytoplasm. The enzyme catalyses L-aspartate 4-semialdehyde + pyruvate = (2S,4S)-4-hydroxy-2,3,4,5-tetrahydrodipicolinate + H2O + H(+). It participates in amino-acid biosynthesis; L-lysine biosynthesis via DAP pathway; (S)-tetrahydrodipicolinate from L-aspartate: step 3/4. In terms of biological role, catalyzes the condensation of (S)-aspartate-beta-semialdehyde [(S)-ASA] and pyruvate to 4-hydroxy-tetrahydrodipicolinate (HTPA). This chain is 4-hydroxy-tetrahydrodipicolinate synthase, found in Oenococcus oeni (strain ATCC BAA-331 / PSU-1).